Consider the following 354-residue polypeptide: D-alanine--D-alanine ligase (354 aa).

The ATP-grasp domain occupies 154-348; it reads RSWFLTNNIN…FTNLIEEIIK (195 aa). 181–232 lines the ATP pocket; sequence MKRPYVIKPITQGSSIGIEVIFEEDDFNFANYDFPYGDQVIIEKYIKGRELQ. The Mg(2+) site is built by Glu-301, Glu-315, and Asn-317.

Belongs to the D-alanine--D-alanine ligase family. Mg(2+) serves as cofactor. The cofactor is Mn(2+).

It is found in the cytoplasm. The catalysed reaction is 2 D-alanine + ATP = D-alanyl-D-alanine + ADP + phosphate + H(+). It participates in cell wall biogenesis; peptidoglycan biosynthesis. In terms of biological role, cell wall formation. This Rickettsia canadensis (strain McKiel) protein is D-alanine--D-alanine ligase.